The chain runs to 124 residues: Fluoride-specific ion channel FluC (124 aa).

Transmembrane regions (helical) follow at residues 4-24 (FLAV…LGLW), 34-54 (LGTL…LAWF), 67-87 (FVIT…AEVV), and 100-120 (LIAF…FYSL). Residues G74 and T77 each contribute to the Na(+) site.

It belongs to the fluoride channel Fluc/FEX (TC 1.A.43) family.

It localises to the cell inner membrane. The catalysed reaction is fluoride(in) = fluoride(out). Its activity is regulated as follows. Na(+) is not transported, but it plays an essential structural role and its presence is essential for fluoride channel function. In terms of biological role, fluoride-specific ion channel. Important for reducing fluoride concentration in the cell, thus reducing its toxicity. The sequence is that of Fluoride-specific ion channel FluC from Thiobacillus denitrificans (strain ATCC 25259 / T1).